Reading from the N-terminus, the 142-residue chain is MVLSAADKSNIQAAWGKVGGHAADYGAEALERMFLSFPTTKTYFPHFDLSHGSAQVKGHGAKVANALTKAVGHLDDLPGALSELSDLHAHKLRVDPVNFKLLSHSLLVTLASHLPNDFTPAVHASLDKFLASVSTVLTSKYR.

One can recognise a Globin domain in the interval 2 to 142 (VLSAADKSNI…VSTVLTSKYR (141 aa)). Position 59 (His-59) interacts with O2. A heme b-binding site is contributed by His-88.

The protein belongs to the globin family. As to quaternary structure, heterotetramer of two alpha chains and two beta chains. In terms of tissue distribution, red blood cells.

Functionally, involved in oxygen transport from the lung to the various peripheral tissues. This is Hemoglobin subunit alpha-2 from Bubalus bubalis (Domestic water buffalo).